The sequence spans 82 residues: Cytochrome b559 subunit alpha (82 aa).

The chain crosses the membrane as a helical span at residues 22–36 (VIHAVTLPSIFLAGF). A heme-binding site is contributed by H24.

Belongs to the PsbE/PsbF family. Heterodimer of an alpha subunit and a beta subunit. PSII is composed of 1 copy each of membrane proteins PsbA, PsbB, PsbC, PsbD, PsbE, PsbF, PsbH, PsbI, PsbJ, PsbK, PsbL, PsbM, PsbT, PsbX, PsbY, PsbZ, Psb30/Ycf12, peripheral proteins PsbO, CyanoQ (PsbQ), PsbU, PsbV and a large number of cofactors. It forms dimeric complexes. Heme b serves as cofactor.

It is found in the cellular thylakoid membrane. Functionally, this b-type cytochrome is tightly associated with the reaction center of photosystem II (PSII). PSII is a light-driven water:plastoquinone oxidoreductase that uses light energy to abstract electrons from H(2)O, generating O(2) and a proton gradient subsequently used for ATP formation. It consists of a core antenna complex that captures photons, and an electron transfer chain that converts photonic excitation into a charge separation. This is Cytochrome b559 subunit alpha from Synechococcus sp. (strain CC9605).